We begin with the raw amino-acid sequence, 268 residues long: MQAMAELDDFFAKKDKKKSKNKTKFVTADEMVKNLEDGTKREVVKPKKPEAAAGGVAVVGENENSGTKVPESAPPVEEEWKEFEEEQRKDYSGLKIGQLSTITAQESAESRATRVPTAQDGGNYDEDDEDSNGYDNADVNKERVGHGPWKKVVPAEEVMQIPVPVEVEKPSSKTYVSPALRYSQQAGSGLGGGTVGGALRPRRAAPDITNTEFFPTLSAARPEEQRKKKNEPAFEEVRHGSRFQRVQESTAAPVAASNRFQSLDDEAS.

The segment covering 40-50 (KREVVKPKKPE) has biased composition (basic and acidic residues). 2 disordered regions span residues 40–145 (KREV…ERVG) and 184–268 (QQAG…DEAS). Over residues 51–61 (AAAGGVAVVGE) the composition is skewed to low complexity. The segment covering 76–85 (VEEEWKEFEE) has biased composition (acidic residues). Over residues 98–107 (QLSTITAQES) the composition is skewed to polar residues. Residues 123–132 (NYDEDDEDSN) show a composition bias toward acidic residues. Basic and acidic residues predominate over residues 221–239 (RPEEQRKKKNEPAFEEVRH).

This sequence belongs to the CDV3 family.

The sequence is that of Protein CDV3 homolog from Drosophila yakuba (Fruit fly).